A 255-amino-acid chain; its full sequence is Leucyl/phenylalanyl-tRNA--protein transferase (255 aa).

This sequence belongs to the L/F-transferase family.

Its subcellular location is the cytoplasm. The enzyme catalyses N-terminal L-lysyl-[protein] + L-leucyl-tRNA(Leu) = N-terminal L-leucyl-L-lysyl-[protein] + tRNA(Leu) + H(+). It catalyses the reaction N-terminal L-arginyl-[protein] + L-leucyl-tRNA(Leu) = N-terminal L-leucyl-L-arginyl-[protein] + tRNA(Leu) + H(+). It carries out the reaction L-phenylalanyl-tRNA(Phe) + an N-terminal L-alpha-aminoacyl-[protein] = an N-terminal L-phenylalanyl-L-alpha-aminoacyl-[protein] + tRNA(Phe). Functionally, functions in the N-end rule pathway of protein degradation where it conjugates Leu, Phe and, less efficiently, Met from aminoacyl-tRNAs to the N-termini of proteins containing an N-terminal arginine or lysine. This chain is Leucyl/phenylalanyl-tRNA--protein transferase, found in Polaromonas sp. (strain JS666 / ATCC BAA-500).